The chain runs to 243 residues: MTMRTATITEFSSSYRSLPGLLHLLQFGDSALPIGGFSFSNGLESAIQQNLVHDKETLREFTLTAMNQAATSDGIALLTAHRAARADDRGALQVIDKAVFERKLNEETRLMTVRMGRKLCELSASIIDDRLNRDWLECIKTAETPGTHPVSLGLAFVALDVDGRDAFGAQQYGVATTILGAALRLMRVSFMDTQKILLEATSTVAPAYEEIADAGIEDMASFAPMVDILAAVHVKGHVRMFMN.

This sequence belongs to the UreF family. As to quaternary structure, ureD, UreF and UreG form a complex that acts as a GTP-hydrolysis-dependent molecular chaperone, activating the urease apoprotein by helping to assemble the nickel containing metallocenter of UreC. The UreE protein probably delivers the nickel.

Its subcellular location is the cytoplasm. Required for maturation of urease via the functional incorporation of the urease nickel metallocenter. This chain is Urease accessory protein UreF 2, found in Brucella suis (strain ATCC 23445 / NCTC 10510).